A 222-amino-acid chain; its full sequence is Triosephosphate isomerase (222 aa).

9–11 (NYK) contacts substrate. The active-site Electrophile is histidine 93. Glutamate 141 acts as the Proton acceptor in catalysis. Substrate-binding positions include isoleucine 146, glycine 181, and 202–203 (AS).

This sequence belongs to the triosephosphate isomerase family. In terms of assembly, homotetramer; dimer of dimers.

It localises to the cytoplasm. The catalysed reaction is D-glyceraldehyde 3-phosphate = dihydroxyacetone phosphate. The protein operates within carbohydrate biosynthesis; gluconeogenesis. It participates in carbohydrate degradation; glycolysis; D-glyceraldehyde 3-phosphate from glycerone phosphate: step 1/1. Its function is as follows. Involved in the gluconeogenesis. Catalyzes stereospecifically the conversion of dihydroxyacetone phosphate (DHAP) to D-glyceraldehyde-3-phosphate (G3P). The protein is Triosephosphate isomerase of Methanobrevibacter smithii (strain ATCC 35061 / DSM 861 / OCM 144 / PS).